A 1853-amino-acid chain; its full sequence is Cellulosomal-scaffolding protein A (1853 aa).

An N-terminal signal peptide occupies residues 1-28 (MRKVISMLLVVAMLTTIFAAMIPQTVSA). 2 consecutive Cohesin domains span residues 29 to 182 (ATMT…VPSD) and 183 to 322 (GVVV…VNVG). Linker (Pro/Thr-rich) stretches follow at residues 323–363 (NATP…PANT) and 523–559 (GGSVVPSTQPVTTPPATTKPPATTKPPATTIPPSDDP). Residues 323–364 (NATPTKGATPTNTATPTKSATATPTRPSVPTNTPTNTPANTP) show a composition bias toward low complexity. Disordered stretches follow at residues 323 to 367 (NATP…PVSG) and 525 to 559 (SVVPSTQPVTTPPATTKPPATTKPPATTIPPSDDP). In terms of domain architecture, CBM3 spans 365–523 (VSGNLKVEFY…GVLVWGKEPG (159 aa)). The span at 525 to 555 (SVVPSTQPVTTPPATTKPPATTKPPATTIPP) shows a compositional bias: low complexity. Cohesin domains are found at residues 560 to 704 (NAIK…NVGD), 724 to 866 (AVRI…VNVG), 889 to 1031 (AVRI…VNVG), 1054 to 1196 (AVRI…VNVG), 1219 to 1361 (AVRI…VNVG), 1384 to 1526 (AVRI…VNVG), and 1548 to 1690 (KLTL…VLVT). The Dockerin domain occupies 1785 to 1852 (IMMWVGDIVK…FGATSSDYDA (68 aa)).

Post-translationally, O-glycosylated on most but not all Thr residues of the linker units. The reducing sugar is galactopyranose.

It is found in the secreted. Its function is as follows. Acts as a scaffolding protein in the cellulosome. It promotes binding of cellulose to the catalytic domains of the cellulolytic enzymes. The sequence is that of Cellulosomal-scaffolding protein A (cipA) from Acetivibrio thermocellus (strain ATCC 27405 / DSM 1237 / JCM 9322 / NBRC 103400 / NCIMB 10682 / NRRL B-4536 / VPI 7372) (Clostridium thermocellum).